A 270-amino-acid polypeptide reads, in one-letter code: Putative phosphoenolpyruvate synthase regulatory protein (270 aa).

Glycine 150–threonine 157 serves as a coordination point for ADP.

This sequence belongs to the pyruvate, phosphate/water dikinase regulatory protein family. PSRP subfamily.

It carries out the reaction [pyruvate, water dikinase] + ADP = [pyruvate, water dikinase]-phosphate + AMP + H(+). The enzyme catalyses [pyruvate, water dikinase]-phosphate + phosphate + H(+) = [pyruvate, water dikinase] + diphosphate. Bifunctional serine/threonine kinase and phosphorylase involved in the regulation of the phosphoenolpyruvate synthase (PEPS) by catalyzing its phosphorylation/dephosphorylation. This chain is Putative phosphoenolpyruvate synthase regulatory protein, found in Shewanella sediminis (strain HAW-EB3).